The following is a 252-amino-acid chain: Major prion protein (252 aa).

An N-terminal signal peptide occupies residues 1–22 (MANLGYWMLVLFVATWSDLGLC). Residues 23 to 229 (KKRPKPGGWN…ESQAYYQRGS (207 aa)) form an interaction with GRB2, ERI3 and SYN1 region. The tract at residues 26–104 (PKPGGWNTGG…HNQWNKPSKP (79 aa)) is disordered. 5 repeat units span residues 51-58 (PQGGGWGQ), 59-66 (PHGGGWGQ), 67-74 (PHGGGWGQ), 75-82 (PHGGGWGQ), and 83-90 (PHGGGWGQ). The tract at residues 51–90 (PQGGGWGQPHGGGWGQPHGGGWGQPHGGGWGQPHGGGWGQ) is 5 X 8 AA tandem repeats of P-H-G-G-G-W-G-Q. A compositionally biased stretch (gly residues) spans 52-92 (QGGGWGQPHGGGWGQPHGGGWGQPHGGGWGQPHGGGWGQAG). 12 residues coordinate Cu(2+): His-60, Gly-61, Gly-62, His-68, Gly-69, Gly-70, His-76, Gly-77, Gly-78, His-84, Gly-85, and Gly-86. Cys-178 and Cys-213 are disulfide-bonded. N-linked (GlcNAc...) asparagine glycans are attached at residues Asn-180 and Asn-196. The GPI-anchor amidated serine moiety is linked to residue Ser-229. Positions 230-252 (SMVLFSSPPVILLISFLIFLIVG) are cleaved as a propeptide — removed in mature form.

This sequence belongs to the prion family. In terms of assembly, monomer and homodimer. Has a tendency to aggregate into amyloid fibrils containing a cross-beta spine, formed by a steric zipper of superposed beta-strands. Soluble oligomers may represent an intermediate stage on the path to fibril formation. Copper binding may promote oligomerization. Interacts with GRB2, APP, ERI3/PRNPIP and SYN1. Mislocalized cytosolically exposed PrP interacts with MGRN1; this interaction alters MGRN1 subcellular location and causes lysosomal enlargement. Interacts with KIAA1191.

It is found in the cell membrane. It localises to the golgi apparatus. In terms of biological role, its primary physiological function is unclear. Has cytoprotective activity against internal or environmental stresses. May play a role in neuronal development and synaptic plasticity. May be required for neuronal myelin sheath maintenance. May play a role in iron uptake and iron homeostasis. Soluble oligomers are toxic to cultured neuroblastoma cells and induce apoptosis (in vitro). Association with GPC1 (via its heparan sulfate chains) targets PRNP to lipid rafts. Also provides Cu(2+) or Zn(2+) for the ascorbate-mediated GPC1 deaminase degradation of its heparan sulfate side chains. This Ateles paniscus (Black spider monkey) protein is Major prion protein (PRNP).